The chain runs to 117 residues: Large ribosomal subunit protein bL20 (117 aa).

It belongs to the bacterial ribosomal protein bL20 family.

Its function is as follows. Binds directly to 23S ribosomal RNA and is necessary for the in vitro assembly process of the 50S ribosomal subunit. It is not involved in the protein synthesizing functions of that subunit. The protein is Large ribosomal subunit protein bL20 of Mesomycoplasma hyopneumoniae (strain 7448) (Mycoplasma hyopneumoniae).